We begin with the raw amino-acid sequence, 570 residues long: Biotin biosynthesis bifunctional protein BioHC (570 aa).

The interval 1–29 is disordered; that stretch reads MTEVNVRAAATPEEKPFLNRTRHEPANPQ. The carboxylesterase stretch occupies residues 1 to 279; sequence MTEVNVRAAA…HISHPREVAT (279 aa). Basic and acidic residues predominate over residues 12–25; sequence PEEKPFLNRTRHEP. Substrate-binding positions include tryptophan 41, 105-106, and 175-179; these read SL and FIALQ. The active-site Nucleophile is serine 105. Active-site residues include aspartate 239 and histidine 267. Histidine 267 contributes to the substrate binding site. Positions 280-570 are malonyl-ACP O-methyltransferase; sequence MINSFLRQQA…RKPLDESASA (291 aa).

This sequence in the N-terminal section; belongs to the AB hydrolase superfamily. Carboxylesterase BioH family. The protein in the C-terminal section; belongs to the methyltransferase superfamily.

It catalyses the reaction a carboxylic ester + H2O = an alcohol + a carboxylate + H(+). The catalysed reaction is malonyl-[ACP] + S-adenosyl-L-methionine = malonyl-[ACP] methyl ester + S-adenosyl-L-homocysteine. The protein operates within cofactor biosynthesis; biotin biosynthesis. Its function is as follows. Converts the free carboxyl group of a malonyl-thioester to its methyl ester by transfer of a methyl group from S-adenosyl-L-methionine (SAM). It allows to synthesize pimeloyl-ACP via the fatty acid synthetic pathway. Functionally, the physiological role of BioH is to remove the methyl group introduced by BioC when the pimeloyl moiety is complete. It allows to synthesize pimeloyl-ACP via the fatty acid synthetic pathway through the hydrolysis of the ester bonds of pimeloyl-ACP esters. The polypeptide is Biotin biosynthesis bifunctional protein BioHC (bioC) (Teredinibacter turnerae (strain ATCC 39867 / T7901)).